A 67-amino-acid polypeptide reads, in one-letter code: uncharacterized protein (67 aa).

The next 2 membrane-spanning stretches (helical) occupy residues 10 to 30 (EFFI…ITMW) and 40 to 60 (LMVG…WMVF).

The protein belongs to the plectrovirus ORF10 family.

It is found in the host membrane. This is an uncharacterized protein from Spiroplasma citri (SpV1).